The sequence spans 194 residues: dCTP deaminase (194 aa).

DCTP contacts are provided by residues 110–115 (RSSLAR), Asp128, 136–138 (VLE), Tyr171, Lys178, and Gln182. The active-site Proton donor/acceptor is the Glu138.

This sequence belongs to the dCTP deaminase family. Homotrimer.

The enzyme catalyses dCTP + H2O + H(+) = dUTP + NH4(+). The protein operates within pyrimidine metabolism; dUMP biosynthesis; dUMP from dCTP (dUTP route): step 1/2. In terms of biological role, catalyzes the deamination of dCTP to dUTP. The protein is dCTP deaminase of Pasteurella multocida (strain Pm70).